We begin with the raw amino-acid sequence, 241 residues long: Putative ABC transporter ATP-binding protein CA_C0773 (241 aa).

The ABC transporter domain occupies 2-241 (IKLEKVSFTY…REFLMECNII (240 aa)). 34–41 (GPNGSGKS) contributes to the ATP binding site.

The protein belongs to the ABC transporter superfamily.

It is found in the cell membrane. Its function is as follows. Probably part of an ABC transporter complex. Responsible for energy coupling to the transport system. The polypeptide is Putative ABC transporter ATP-binding protein CA_C0773 (Clostridium acetobutylicum (strain ATCC 824 / DSM 792 / JCM 1419 / IAM 19013 / LMG 5710 / NBRC 13948 / NRRL B-527 / VKM B-1787 / 2291 / W)).